A 353-amino-acid chain; its full sequence is DNA polymerase IV (353 aa).

Positions 6-187 constitute a UmuC domain; sequence IIHIDCDCFY…LPVTKLHGVG (182 aa). Mg(2+) is bound by residues Asp10 and Asp105. Residue Glu106 is part of the active site.

It belongs to the DNA polymerase type-Y family. As to quaternary structure, monomer. It depends on Mg(2+) as a cofactor.

The protein localises to the cytoplasm. It catalyses the reaction DNA(n) + a 2'-deoxyribonucleoside 5'-triphosphate = DNA(n+1) + diphosphate. In terms of biological role, poorly processive, error-prone DNA polymerase involved in untargeted mutagenesis. Copies undamaged DNA at stalled replication forks, which arise in vivo from mismatched or misaligned primer ends. These misaligned primers can be extended by PolIV. Exhibits no 3'-5' exonuclease (proofreading) activity. May be involved in translesional synthesis, in conjunction with the beta clamp from PolIII. The chain is DNA polymerase IV from Pseudomonas syringae pv. tomato (strain ATCC BAA-871 / DC3000).